The following is a 375-amino-acid chain: MQCALYDAGRCRSCQWITQPIPEQLSAKTADLKNLLADFPVEEWCAPVSGPEQGFRNKAKMVVSGSVEKPLLGMLHRDGTPEDLCDCPLYPASFAPVFAALKPFIARAGLTPYNVARKRGELKYILLTESQSDGGMMLRFVLRSDTKLAQLRKALPWLQEQLPQLKVITVNIQPVHMAIMEGETEIYLTEQQALAERFNDVPLWIRPQSFFQTNPAVASQLYATARDWVRQLPVNHMWDLFCGVGGFGLHCATPDIQLTGIEIAPEAIACAKQSAAELGLTRLQFQALDSTQFATAQGEVPELVLVNPPRRGIGIPLCDYLSTMAPRFIIYSSCNAQTMAKDIRELPGYRIERVQLFDMFPHTAHYEVLTLLVKQ.

Residues cysteine 3, cysteine 11, cysteine 14, and cysteine 87 each coordinate [4Fe-4S] cluster. Positions 212, 241, 262, and 307 each coordinate S-adenosyl-L-methionine. Residue cysteine 334 is the Nucleophile of the active site.

This sequence belongs to the class I-like SAM-binding methyltransferase superfamily. RNA M5U methyltransferase family. RlmC subfamily.

It catalyses the reaction uridine(747) in 23S rRNA + S-adenosyl-L-methionine = 5-methyluridine(747) in 23S rRNA + S-adenosyl-L-homocysteine + H(+). Catalyzes the formation of 5-methyl-uridine at position 747 (m5U747) in 23S rRNA. The protein is 23S rRNA (uracil(747)-C(5))-methyltransferase RlmC of Escherichia coli (strain SMS-3-5 / SECEC).